A 305-amino-acid chain; its full sequence is UDP-3-O-acyl-N-acetylglucosamine deacetylase (305 aa).

Zn(2+) contacts are provided by His78, His237, and Asp241. The active-site Proton donor is His264.

It belongs to the LpxC family. Zn(2+) is required as a cofactor.

The catalysed reaction is a UDP-3-O-[(3R)-3-hydroxyacyl]-N-acetyl-alpha-D-glucosamine + H2O = a UDP-3-O-[(3R)-3-hydroxyacyl]-alpha-D-glucosamine + acetate. It participates in glycolipid biosynthesis; lipid IV(A) biosynthesis; lipid IV(A) from (3R)-3-hydroxytetradecanoyl-[acyl-carrier-protein] and UDP-N-acetyl-alpha-D-glucosamine: step 2/6. Functionally, catalyzes the hydrolysis of UDP-3-O-myristoyl-N-acetylglucosamine to form UDP-3-O-myristoylglucosamine and acetate, the committed step in lipid A biosynthesis. The protein is UDP-3-O-acyl-N-acetylglucosamine deacetylase of Cupriavidus taiwanensis (strain DSM 17343 / BCRC 17206 / CCUG 44338 / CIP 107171 / LMG 19424 / R1) (Ralstonia taiwanensis (strain LMG 19424)).